Consider the following 310-residue polypeptide: Inorganic pyrophosphatase, mitochondrial (310 aa).

A mitochondrion-targeting transit peptide spans 1–30 (MNLLRMNALTSKARSIERLKQTLNILSIRN). Residues Asp-152, Asp-157, and Asp-189 each coordinate Mg(2+).

The protein belongs to the PPase family. As to quaternary structure, homodimer that binds non-covalently to a protein complex in the inner mitochondrial membrane. Mg(2+) is required as a cofactor.

The protein localises to the mitochondrion. It carries out the reaction diphosphate + H2O = 2 phosphate + H(+). Its function is as follows. Involved in energy production. Its activity is stimulated by uncouplers of ATP synthesis. In Saccharomyces cerevisiae (strain ATCC 204508 / S288c) (Baker's yeast), this protein is Inorganic pyrophosphatase, mitochondrial (PPA2).